The primary structure comprises 235 residues: MRRLMIDQLFKLTGHRFKDEEKLKRALTHASVQDSEQGNYERLEFLGDRVLGLLIAEMLYQLFPQASEGELSVRLNHLVNAQTCADIAREMRLPDMIQVGFEMRNFEGRRLINMHADVVEALIAVMYLDGGLESVRPFIQKYWQSRAKKMDAGRRDAKTELQEWAHIQGDAQPHYQVIKRSGPDHDPVFMVEVSISGFASEIGQGSSKRNAERMAAEKILRREGVWKTVEKNDYE.

One can recognise an RNase III domain in the interval 6–131 (IDQLFKLTGH…LIAVMYLDGG (126 aa)). Residue Glu44 coordinates Mg(2+). Asp48 is a catalytic residue. 2 residues coordinate Mg(2+): Asp117 and Glu120. Glu120 is a catalytic residue. The DRBM domain occupies 156–225 (DAKTELQEWA…AEKILRREGV (70 aa)).

It belongs to the ribonuclease III family. As to quaternary structure, homodimer. The cofactor is Mg(2+).

Its subcellular location is the cytoplasm. The enzyme catalyses Endonucleolytic cleavage to 5'-phosphomonoester.. Its function is as follows. Digests double-stranded RNA. Involved in the processing of primary rRNA transcript to yield the immediate precursors to the large and small rRNAs (23S and 16S). Processes some mRNAs, and tRNAs when they are encoded in the rRNA operon. Processes pre-crRNA and tracrRNA of type II CRISPR loci if present in the organism. This Bartonella tribocorum (strain CIP 105476 / IBS 506) protein is Ribonuclease 3.